The sequence spans 222 residues: Gamma-glutamylcyclotransferase and putative RNase MJ0434 (222 aa).

Arg-75 is a catalytic residue. An RX(4)HXY motif motif is present at residues 75-82 (RDILIRKY). Tyr-82 is subject to O-di-AMP-tyrosine.

The protein in the N-terminal section; belongs to the HepT RNase toxin family. In the C-terminal section; belongs to the gamma-glutamylcyclotransferase family. As to quaternary structure, homodimer, probably forms a complex with cognate antitoxin MJ0435. Modified by cognate antitoxin MJ0435; probably at least 2 successive AMPylation events occur on Tyr-82.

Functionally, probable toxic component of a putative type VII toxin-antitoxin (TA) system, probably an RNase. Probably neutralized by cognate antitoxin MJ0435. Neutralization may be due to AMPylation by MJ0435. The protein is Gamma-glutamylcyclotransferase and putative RNase MJ0434 of Methanocaldococcus jannaschii (strain ATCC 43067 / DSM 2661 / JAL-1 / JCM 10045 / NBRC 100440) (Methanococcus jannaschii).